A 121-amino-acid polypeptide reads, in one-letter code: DNA-directed RNA polymerase subunit omega (121 aa).

It belongs to the RNA polymerase subunit omega family. The RNAP catalytic core consists of 2 alpha, 1 beta, 1 beta' and 1 omega subunit. When a sigma factor is associated with the core the holoenzyme is formed, which can initiate transcription.

It catalyses the reaction RNA(n) + a ribonucleoside 5'-triphosphate = RNA(n+1) + diphosphate. Functionally, promotes RNA polymerase assembly. Latches the N- and C-terminal regions of the beta' subunit thereby facilitating its interaction with the beta and alpha subunits. This Syntrophobacter fumaroxidans (strain DSM 10017 / MPOB) protein is DNA-directed RNA polymerase subunit omega.